A 195-amino-acid polypeptide reads, in one-letter code: GTP cyclohydrolase-2 (195 aa).

48–52 (RIHSE) provides a ligand contact to GTP. The Zn(2+) site is built by C53, C64, and C66. Residues Q69, 90-92 (EGR), and T112 each bind GTP. D124 acts as the Proton acceptor in catalysis. The Nucleophile role is filled by R126. GTP-binding residues include T147 and K152.

Belongs to the GTP cyclohydrolase II family. The cofactor is Zn(2+).

The catalysed reaction is GTP + 4 H2O = 2,5-diamino-6-hydroxy-4-(5-phosphoribosylamino)-pyrimidine + formate + 2 phosphate + 3 H(+). The protein operates within cofactor biosynthesis; riboflavin biosynthesis; 5-amino-6-(D-ribitylamino)uracil from GTP: step 1/4. In terms of biological role, catalyzes the conversion of GTP to 2,5-diamino-6-ribosylamino-4(3H)-pyrimidinone 5'-phosphate (DARP), formate and pyrophosphate. The chain is GTP cyclohydrolase-2 from Campylobacter fetus subsp. fetus (strain 82-40).